Reading from the N-terminus, the 328-residue chain is Beta-ketoacyl-[acyl-carrier-protein] synthase III (328 aa).

Catalysis depends on residues C122 and H255. Positions 256–260 (QANIR) are ACP-binding. Residue N285 is part of the active site.

It belongs to the thiolase-like superfamily. FabH family. In terms of assembly, homodimer.

It localises to the cytoplasm. It carries out the reaction malonyl-[ACP] + acetyl-CoA + H(+) = 3-oxobutanoyl-[ACP] + CO2 + CoA. Its pathway is lipid metabolism; fatty acid biosynthesis. Its function is as follows. Catalyzes the condensation reaction of fatty acid synthesis by the addition to an acyl acceptor of two carbons from malonyl-ACP. Catalyzes the first condensation reaction which initiates fatty acid synthesis and may therefore play a role in governing the total rate of fatty acid production. Possesses both acetoacetyl-ACP synthase and acetyl transacylase activities. Its substrate specificity determines the biosynthesis of branched-chain and/or straight-chain of fatty acids. The sequence is that of Beta-ketoacyl-[acyl-carrier-protein] synthase III from Polynucleobacter asymbioticus (strain DSM 18221 / CIP 109841 / QLW-P1DMWA-1) (Polynucleobacter necessarius subsp. asymbioticus).